We begin with the raw amino-acid sequence, 80 residues long: ATP synthase subunit c (80 aa).

The next 2 helical transmembrane spans lie at 11–31 and 53–73; these read IAAA…IGIL and FFIV…LGLY.

This sequence belongs to the ATPase C chain family. In terms of assembly, F-type ATPases have 2 components, F(1) - the catalytic core - and F(0) - the membrane proton channel. F(1) has five subunits: alpha(3), beta(3), gamma(1), delta(1), epsilon(1). F(0) has three main subunits: a(1), b(2) and c(10-14). The alpha and beta chains form an alternating ring which encloses part of the gamma chain. F(1) is attached to F(0) by a central stalk formed by the gamma and epsilon chains, while a peripheral stalk is formed by the delta and b chains.

It localises to the cell inner membrane. F(1)F(0) ATP synthase produces ATP from ADP in the presence of a proton or sodium gradient. F-type ATPases consist of two structural domains, F(1) containing the extramembraneous catalytic core and F(0) containing the membrane proton channel, linked together by a central stalk and a peripheral stalk. During catalysis, ATP synthesis in the catalytic domain of F(1) is coupled via a rotary mechanism of the central stalk subunits to proton translocation. Its function is as follows. Key component of the F(0) channel; it plays a direct role in translocation across the membrane. A homomeric c-ring of between 10-14 subunits forms the central stalk rotor element with the F(1) delta and epsilon subunits. The polypeptide is ATP synthase subunit c (Aeromonas hydrophila subsp. hydrophila (strain ATCC 7966 / DSM 30187 / BCRC 13018 / CCUG 14551 / JCM 1027 / KCTC 2358 / NCIMB 9240 / NCTC 8049)).